The primary structure comprises 250 residues: Large ribosomal subunit protein uL29m (250 aa).

Lys-144 carries the post-translational modification N6-acetyllysine.

Belongs to the universal ribosomal protein uL29 family. Component of the mitochondrial large ribosomal subunit (mt-LSU). Mature mammalian 55S mitochondrial ribosomes consist of a small (28S) and a large (39S) subunit. The 28S small subunit contains a 12S ribosomal RNA (12S mt-rRNA) and 30 different proteins. The 39S large subunit contains a 16S rRNA (16S mt-rRNA), a copy of mitochondrial valine transfer RNA (mt-tRNA(Val)), which plays an integral structural role, and 52 different proteins.

It localises to the mitochondrion. This Homo sapiens (Human) protein is Large ribosomal subunit protein uL29m (MRPL47).